The chain runs to 85 residues: Sec-independent protein translocase protein TatA (85 aa).

A helical membrane pass occupies residues 1 to 21; it reads MGGISIWQLLIIALIVVLLFG. A disordered region spans residues 43–85; that stretch reads MSSDEDKKALEDAEAAKSVQTAQTAQPTQQATEKKPESNKEQA. Over residues 46 to 57 the composition is skewed to basic and acidic residues; the sequence is DEDKKALEDAEA. The span at 58–73 shows a compositional bias: low complexity; sequence AKSVQTAQTAQPTQQA. Positions 74-85 are enriched in basic and acidic residues; sequence TEKKPESNKEQA.

Belongs to the TatA/E family. As to quaternary structure, the Tat system comprises two distinct complexes: a TatABC complex, containing multiple copies of TatA, TatB and TatC subunits, and a separate TatA complex, containing only TatA subunits. Substrates initially bind to the TatABC complex, which probably triggers association of the separate TatA complex to form the active translocon.

The protein resides in the cell inner membrane. In terms of biological role, part of the twin-arginine translocation (Tat) system that transports large folded proteins containing a characteristic twin-arginine motif in their signal peptide across membranes. TatA could form the protein-conducting channel of the Tat system. This Shewanella sp. (strain ANA-3) protein is Sec-independent protein translocase protein TatA.